Reading from the N-terminus, the 189-residue chain is Peptidyl-tRNA hydrolase (189 aa).

Tyrosine 14 serves as a coordination point for tRNA. The active-site Proton acceptor is histidine 19. Positions 64, 66, and 112 each coordinate tRNA.

It belongs to the PTH family. In terms of assembly, monomer.

It is found in the cytoplasm. The catalysed reaction is an N-acyl-L-alpha-aminoacyl-tRNA + H2O = an N-acyl-L-amino acid + a tRNA + H(+). In terms of biological role, hydrolyzes ribosome-free peptidyl-tRNAs (with 1 or more amino acids incorporated), which drop off the ribosome during protein synthesis, or as a result of ribosome stalling. Its function is as follows. Catalyzes the release of premature peptidyl moieties from peptidyl-tRNA molecules trapped in stalled 50S ribosomal subunits, and thus maintains levels of free tRNAs and 50S ribosomes. The polypeptide is Peptidyl-tRNA hydrolase (Clostridium botulinum (strain Loch Maree / Type A3)).